The following is a 285-amino-acid chain: Casein kinase II subunit beta-2 (285 aa).

The disordered stretch occupies residues 226-285 (FKDAEDEAELDDDDEEEEEEEEEEEELAAMDEAEGAQQQHAAAAAGTATGGVAAGGEGVH). Acidic residues predominate over residues 229–259 (AEDEAELDDDDEEEEEEEEEEEELAAMDEAE). Residues 260–272 (GAQQQHAAAAAGT) are compositionally biased toward low complexity. Positions 273-285 (ATGGVAAGGEGVH) are enriched in gly residues.

This sequence belongs to the casein kinase 2 subunit beta family. In terms of assembly, tetramer composed of two alpha chains, one beta chain and one beta' chain. Phosphorylated by alpha subunit.

Its function is as follows. Regulatory subunit of casein kinase II/CK2. As part of the kinase complex regulates the basal catalytic activity of the alpha subunit a constitutively active serine/threonine-protein kinase that phosphorylates a large number of substrates containing acidic residues C-terminal to the phosphorylated serine or threonine. This Neurospora crassa (strain ATCC 24698 / 74-OR23-1A / CBS 708.71 / DSM 1257 / FGSC 987) protein is Casein kinase II subunit beta-2 (ckb-2).